The chain runs to 444 residues: MSTFTRVMEEKIMPVAGKIAGQRHLSALRDGIILTMPLIIIGSVFLILTSLPIPGYADFMASVFGNEWADKLGYPVNASFDIMAMIAAFGIAYRLAESYGVDALSAGAISIAAFLLATPFEVPFTPHGSTESIMVGGGIPITLLGSKGLFVAMLIALFSTEIYRYIIQKNIVFKMPDGVPPAVSKSFVALIPGFIIVLLVWLARLLIEMTPFQSLHNVVGDLLGTPLSILGGSLGGSLIAEFVQMLLWSCGIHGASIIGGIMAPIWYGAMDANRLAFQAGEALPSIFTTQFFQIWINVGGSGATLALVLTMLVRSRSKQMKQLGRLGIGPALFNINEPIIFGMPIVMNPLLIVPFIIAPLLTITATYIGMSTGLVARPAGIAVPWTMPPLISGYLATGGKVSGAVMQLVNLLITCAIYYPFFRIWDHQKWREESAVESGDKNVM.

The region spanning 8 to 421 (MEEKIMPVAG…LITCAIYYPF (414 aa)) is the PTS EIIC type-3 domain. 10 helical membrane passes run 31 to 51 (GIIL…LTSL), 72 to 92 (LGYP…FGIA), 104 to 124 (LSAG…EVPF), 138 to 158 (GIPI…IALF), 187 to 207 (FVAL…RLLI), 223 to 243 (LGTP…AEFV), 246 to 266 (LLWS…APIW), 291 to 311 (FFQI…VLTM), 349 to 371 (PLLI…IGMS), and 402 to 422 (SGAV…YPFF).

Its subcellular location is the cell membrane. In terms of biological role, the phosphoenolpyruvate-dependent sugar phosphotransferase system (PTS), a major carbohydrate active -transport system, catalyzes the phosphorylation of incoming sugar substrates concomitant with their translocation across the cell membrane. The protein is Putative permease IIC component YwbA (ywbA) of Bacillus subtilis (strain 168).